We begin with the raw amino-acid sequence, 85 residues long: RNA-binding protein Hfq (85 aa).

Residues 9–69 (DQLLNTARKD…ISTIIPAKII (61 aa)) form the Sm domain.

The protein belongs to the Hfq family. Homohexamer.

Functionally, RNA chaperone that binds small regulatory RNA (sRNAs) and mRNAs to facilitate mRNA translational regulation in response to envelope stress, environmental stress and changes in metabolite concentrations. Also binds with high specificity to tRNAs. The polypeptide is RNA-binding protein Hfq (Leptospira interrogans serogroup Icterohaemorrhagiae serovar copenhageni (strain Fiocruz L1-130)).